A 773-amino-acid polypeptide reads, in one-letter code: ATP-dependent RNA helicase MAK5 (773 aa).

The span at 73-82 shows a compositional bias: basic and acidic residues; sequence KDSNKEKVGD. Disordered regions lie at residues 73–99 and 114–144; these read KDSN…ESEL and SAAS…VDED. The span at 83 to 99 shows a compositional bias: acidic residues; that stretch reads DQESVENESGSDSESEL. At Thr-135 the chain carries Phosphothreonine. Ser-138 carries the post-translational modification Phosphoserine. A Q motif motif is present at residues 171-199; the sequence is EWTNLAPLSMTILQSLQNLNFLRPTEIQK. Positions 202 to 399 constitute a Helicase ATP-binding domain; the sequence is IPVIMQGVDV…SSSRQVKDRR (198 aa). 215–222 is a binding site for ATP; sequence ASTGSGKT. A DEAD box motif is present at residues 333–336; it reads DEAD. Residues 452–615 enclose the Helicase C-terminal domain; that stretch reads DLYCYYFLTM…STDLNSRSTN (164 aa). Position 678 is a phosphoserine (Ser-678).

This sequence belongs to the DEAD box helicase family. DDX24/MAK5 subfamily.

Its subcellular location is the nucleus. It is found in the nucleolus. The catalysed reaction is ATP + H2O = ADP + phosphate + H(+). In terms of biological role, ATP-binding RNA helicase involved in the biogenesis of 60S ribosomal subunits and is required for the normal formation of 25S and 5.8S rRNAs. Required for the maintenance of dsRNA killer plasmid. This chain is ATP-dependent RNA helicase MAK5 (MAK5), found in Saccharomyces cerevisiae (strain ATCC 204508 / S288c) (Baker's yeast).